Reading from the N-terminus, the 459-residue chain is Mitochondrial distribution and morphology protein 34 (459 aa).

The SMP-LTD domain maps to 1–190 (MSFRFNEAVF…LPSLIFNTSQ (190 aa)). The segment covering 338 to 347 (RSNSNDDNAK) has biased composition (basic and acidic residues). The tract at residues 338-375 (RSNSNDDNAKPRRRKIKCKKTRTPSNLQSQGEQAVDDS) is disordered. Positions 348–359 (PRRRKIKCKKTR) are enriched in basic residues.

Belongs to the MDM34 family. As to quaternary structure, component of the ER-mitochondria encounter structure (ERMES) or MDM complex, composed of MMM1, MDM10, MDM12 and MDM34. Ubiquitinated by a SCF (SKP1-CUL1-F-box protein) E3 ubiquitin-protein ligase complex containing the F-box protein MDM30. Ubiquitination is important for mitochondrial integrity.

It is found in the mitochondrion outer membrane. Component of the ERMES/MDM complex, which serves as a molecular tether to connect the endoplasmic reticulum (ER) and mitochondria. Components of this complex are involved in the control of mitochondrial shape and protein biogenesis, and function in nonvesicular lipid trafficking between the ER and mitochondria. MDM34 is required for the interaction of the ER-resident membrane protein MMM1 and the outer mitochondrial membrane-resident beta-barrel protein MDM10. This chain is Mitochondrial distribution and morphology protein 34, found in Saccharomyces cerevisiae (strain AWRI1631) (Baker's yeast).